A 454-amino-acid chain; its full sequence is Bifunctional protein GlmU (454 aa).

A pyrophosphorylase region spans residues 1–228 (MSPLHVVILA…PFEVQGVNNR (228 aa)). Residues 9–12 (LAAG), lysine 23, glutamine 74, 79–80 (GT), 101–103 (YGD), glycine 138, glutamate 153, asparagine 168, and asparagine 226 each bind UDP-N-acetyl-alpha-D-glucosamine. Aspartate 103 contributes to the Mg(2+) binding site. Asparagine 226 lines the Mg(2+) pocket. The interval 229 to 249 (LQLAELERWYQRQQAERLMTE) is linker. An N-acetyltransferase region spans residues 250-454 (GASLADPARI…IAGWERPKKA (205 aa)). Positions 332 and 350 each coordinate UDP-N-acetyl-alpha-D-glucosamine. The Proton acceptor role is filled by histidine 362. The UDP-N-acetyl-alpha-D-glucosamine site is built by tyrosine 365 and asparagine 376. Residues alanine 379, 385 to 386 (NY), serine 404, alanine 422, and arginine 439 contribute to the acetyl-CoA site.

This sequence in the N-terminal section; belongs to the N-acetylglucosamine-1-phosphate uridyltransferase family. In the C-terminal section; belongs to the transferase hexapeptide repeat family. As to quaternary structure, homotrimer. Mg(2+) is required as a cofactor.

The protein resides in the cytoplasm. The enzyme catalyses alpha-D-glucosamine 1-phosphate + acetyl-CoA = N-acetyl-alpha-D-glucosamine 1-phosphate + CoA + H(+). It catalyses the reaction N-acetyl-alpha-D-glucosamine 1-phosphate + UTP + H(+) = UDP-N-acetyl-alpha-D-glucosamine + diphosphate. It functions in the pathway nucleotide-sugar biosynthesis; UDP-N-acetyl-alpha-D-glucosamine biosynthesis; N-acetyl-alpha-D-glucosamine 1-phosphate from alpha-D-glucosamine 6-phosphate (route II): step 2/2. The protein operates within nucleotide-sugar biosynthesis; UDP-N-acetyl-alpha-D-glucosamine biosynthesis; UDP-N-acetyl-alpha-D-glucosamine from N-acetyl-alpha-D-glucosamine 1-phosphate: step 1/1. Its pathway is bacterial outer membrane biogenesis; LPS lipid A biosynthesis. Its function is as follows. Catalyzes the last two sequential reactions in the de novo biosynthetic pathway for UDP-N-acetylglucosamine (UDP-GlcNAc). The C-terminal domain catalyzes the transfer of acetyl group from acetyl coenzyme A to glucosamine-1-phosphate (GlcN-1-P) to produce N-acetylglucosamine-1-phosphate (GlcNAc-1-P), which is converted into UDP-GlcNAc by the transfer of uridine 5-monophosphate (from uridine 5-triphosphate), a reaction catalyzed by the N-terminal domain. This chain is Bifunctional protein GlmU, found in Marinobacter nauticus (strain ATCC 700491 / DSM 11845 / VT8) (Marinobacter aquaeolei).